A 390-amino-acid polypeptide reads, in one-letter code: Probable NADH-dependent butanol dehydrogenase 2 (390 aa).

This sequence belongs to the iron-containing alcohol dehydrogenase family.

Its pathway is alcohol metabolism; butanol biosynthesis. This Bacillus subtilis (strain 168) protein is Probable NADH-dependent butanol dehydrogenase 2 (yugK).